We begin with the raw amino-acid sequence, 347 residues long: Dihydroorotase (347 aa).

2 residues coordinate Zn(2+): His13 and His15. Residues 15–17 and Asn41 each bind substrate; that span reads HLR. The Zn(2+) site is built by Lys99, His136, and His174. At Lys99 the chain carries N6-carboxylysine. A substrate-binding site is contributed by His136. Leu219 serves as a coordination point for substrate. A Zn(2+)-binding site is contributed by Asp247. Asp247 is an active-site residue. Residues His251 and Ala263 each contribute to the substrate site.

The protein belongs to the metallo-dependent hydrolases superfamily. DHOase family. Class II DHOase subfamily. As to quaternary structure, homodimer. Requires Zn(2+) as cofactor.

The catalysed reaction is (S)-dihydroorotate + H2O = N-carbamoyl-L-aspartate + H(+). The protein operates within pyrimidine metabolism; UMP biosynthesis via de novo pathway; (S)-dihydroorotate from bicarbonate: step 3/3. Its function is as follows. Catalyzes the reversible cyclization of carbamoyl aspartate to dihydroorotate. The polypeptide is Dihydroorotase (Sinorhizobium medicae (strain WSM419) (Ensifer medicae)).